Here is a 164-residue protein sequence, read N- to C-terminus: CASP-like protein 1C1 (164 aa).

The Cytoplasmic portion of the chain corresponds to 1–7 (MVKLTKR). The helical transmembrane segment at 8–28 (IGGLVLRLAAFGAALAALIVM) threads the bilayer. Residues 29–51 (ITSRERASFLAISLEAKYTDMAA) are Extracellular-facing. A helical membrane pass occupies residues 52 to 72 (FKYFVIANAVVSVYSFLVLFL). Residues 73-80 (PKESLLWK) lie on the Cytoplasmic side of the membrane. The chain crosses the membrane as a helical span at residues 81–101 (FVVVLDLVMTMLLTSSLSAAL). Topologically, residues 102–129 (AVAQVGKKGNANAGWLPICGQVPKFCDQ) are extracellular. The helical transmembrane segment at 130–150 (ITGALIAGFVALVLYVLLLLY) threads the bilayer. The Cytoplasmic portion of the chain corresponds to 151-164 (SLHAVVDPFLLQKS).

It belongs to the Casparian strip membrane proteins (CASP) family. In terms of assembly, homodimer and heterodimers. As to expression, expressed in the stele of the root.

The protein resides in the cell membrane. The sequence is that of CASP-like protein 1C1 from Arabidopsis thaliana (Mouse-ear cress).